Here is a 372-residue protein sequence, read N- to C-terminus: Putative F-box/kelch-repeat protein At3g22730 (372 aa).

Positions 1–50 (MMMSDLSLDLVEEILSRVPATSLKRLRSTCKLWNALFKNPGFTKKQFLKA) constitute an F-box domain. Kelch repeat units lie at residues 155 to 204 (ILRC…SFKG), 245 to 293 (ALSV…PIRG), and 324 to 372 (KVYI…IIKE).

In Arabidopsis thaliana (Mouse-ear cress), this protein is Putative F-box/kelch-repeat protein At3g22730.